A 443-amino-acid polypeptide reads, in one-letter code: Glutamyl-tRNA reductase (443 aa).

Substrate contacts are provided by residues 49–52 (TCNR), serine 109, 114–116 (ETQ), and glutamine 120. Catalysis depends on cysteine 50, which acts as the Nucleophile. 189-194 (GAGKMG) is a binding site for NADP(+).

This sequence belongs to the glutamyl-tRNA reductase family. As to quaternary structure, homodimer.

It carries out the reaction (S)-4-amino-5-oxopentanoate + tRNA(Glu) + NADP(+) = L-glutamyl-tRNA(Glu) + NADPH + H(+). It functions in the pathway porphyrin-containing compound metabolism; protoporphyrin-IX biosynthesis; 5-aminolevulinate from L-glutamyl-tRNA(Glu): step 1/2. Its function is as follows. Catalyzes the NADPH-dependent reduction of glutamyl-tRNA(Glu) to glutamate 1-semialdehyde (GSA). This Bacillus mycoides (strain KBAB4) (Bacillus weihenstephanensis) protein is Glutamyl-tRNA reductase.